The primary structure comprises 229 residues: Cytochrome c oxidase subunit 2 (229 aa).

Residues 1–14 lie on the Mitochondrial intermembrane side of the membrane; sequence MPTPNQTNFQDAAS. A helical transmembrane segment spans residues 15–45; sequence PLMEELTHFHDHTLMIVFMISLLVLYILLSM. At 46–59 the chain is on the mitochondrial matrix side; it reads LSTKLTHTNTANAQ. A helical transmembrane segment spans residues 60-87; it reads QAEMVWTILPAIILITIALPSLQILYMM. Over 88–229 the chain is Mitochondrial intermembrane; sequence DEINKPHMTI…DLWLAMIDTL (142 aa). His161, Cys196, Glu198, Cys200, His204, and Met207 together coordinate Cu cation. Glu198 contributes to the Mg(2+) binding site.

This sequence belongs to the cytochrome c oxidase subunit 2 family. Component of the cytochrome c oxidase (complex IV, CIV), a multisubunit enzyme composed of 14 subunits. The complex is composed of a catalytic core of 3 subunits MT-CO1, MT-CO2 and MT-CO3, encoded in the mitochondrial DNA, and 11 supernumerary subunits COX4I, COX5A, COX5B, COX6A, COX6B, COX6C, COX7A, COX7B, COX7C, COX8 and NDUFA4, which are encoded in the nuclear genome. The complex exists as a monomer or a dimer and forms supercomplexes (SCs) in the inner mitochondrial membrane with NADH-ubiquinone oxidoreductase (complex I, CI) and ubiquinol-cytochrome c oxidoreductase (cytochrome b-c1 complex, complex III, CIII), resulting in different assemblies (supercomplex SCI(1)III(2)IV(1) and megacomplex MCI(2)III(2)IV(2)). Found in a complex with TMEM177, COA6, COX18, COX20, SCO1 and SCO2. Interacts with TMEM177 in a COX20-dependent manner. Interacts with COX20. Interacts with COX16. Requires Cu cation as cofactor.

It is found in the mitochondrion inner membrane. It catalyses the reaction 4 Fe(II)-[cytochrome c] + O2 + 8 H(+)(in) = 4 Fe(III)-[cytochrome c] + 2 H2O + 4 H(+)(out). Component of the cytochrome c oxidase, the last enzyme in the mitochondrial electron transport chain which drives oxidative phosphorylation. The respiratory chain contains 3 multisubunit complexes succinate dehydrogenase (complex II, CII), ubiquinol-cytochrome c oxidoreductase (cytochrome b-c1 complex, complex III, CIII) and cytochrome c oxidase (complex IV, CIV), that cooperate to transfer electrons derived from NADH and succinate to molecular oxygen, creating an electrochemical gradient over the inner membrane that drives transmembrane transport and the ATP synthase. Cytochrome c oxidase is the component of the respiratory chain that catalyzes the reduction of oxygen to water. Electrons originating from reduced cytochrome c in the intermembrane space (IMS) are transferred via the dinuclear copper A center (CU(A)) of subunit 2 and heme A of subunit 1 to the active site in subunit 1, a binuclear center (BNC) formed by heme A3 and copper B (CU(B)). The BNC reduces molecular oxygen to 2 water molecules using 4 electrons from cytochrome c in the IMS and 4 protons from the mitochondrial matrix. In Pelomedusa subrufa (African side-necked turtle), this protein is Cytochrome c oxidase subunit 2 (MT-CO2).